Consider the following 168-residue polypeptide: Photosystem I assembly protein Ycf3 (168 aa).

TPR repeat units lie at residues 35 to 68, 72 to 105, and 120 to 153; these read AFTYYRDGMSAQSEGNYAEALQNYYEAMRLEIDP, SYILYNIGLIHTSNGEHTKALEYYFRALERNPFL, and GEQAIQQGDSEIAEAWFDQAAEYWKQAIALTPGN.

It belongs to the Ycf3 family.

It is found in the plastid. Its subcellular location is the chloroplast thylakoid membrane. In terms of biological role, essential for the assembly of the photosystem I (PSI) complex. May act as a chaperone-like factor to guide the assembly of the PSI subunits. In Solanum tuberosum (Potato), this protein is Photosystem I assembly protein Ycf3.